A 711-amino-acid polypeptide reads, in one-letter code: Early transcription factor 82 kDa subunit (711 aa).

Belongs to the poxviridae VETF large subunit family. In terms of assembly, heterodimer of a 70 kDa and a 82 kDa subunit. Part of the early transcription complex composed of ETF, RAP94, and the DNA-directed RNA polymerase.

Its function is as follows. Acts with RNA polymerase to initiate transcription from early gene promoters. Is recruited by the RPO-associated protein of 94 kDa (RAP94) to form the early transcription complex, which also contains the core RNA polymerase. ETF heterodimer binds to early gene promoters. In Oryctolagus cuniculus (Rabbit), this protein is Early transcription factor 82 kDa subunit (VETFL).